The primary structure comprises 168 residues: INO80 complex subunit 3 (168 aa).

The span at 115–129 (TNSTLSTPKSFHSPL) shows a compositional bias: polar residues. The interval 115 to 168 (TNSTLSTPKSFHSPLQSRGISPSSAQSSAAVSSSRKQKRKRTSEGPSERRARKK) is disordered. The span at 130-148 (QSRGISPSSAQSSAAVSSS) shows a compositional bias: low complexity. A compositionally biased stretch (basic and acidic residues) spans 156 to 168 (TSEGPSERRARKK).

As to quaternary structure, component of the INO80 chromatin remodeling complex.

The protein localises to the nucleus. Component of the INO80 complex which remodels chromatin by shifting nucleosomes and is involved in DNA repair. The polypeptide is INO80 complex subunit 3 (iec3) (Schizosaccharomyces pombe (strain 972 / ATCC 24843) (Fission yeast)).